Consider the following 160-residue polypeptide: NADH-quinone oxidoreductase subunit B (160 aa).

Residues cysteine 37, cysteine 38, cysteine 102, and cysteine 132 each coordinate [4Fe-4S] cluster.

This sequence belongs to the complex I 20 kDa subunit family. As to quaternary structure, NDH-1 is composed of 14 different subunits. Subunits NuoB, C, D, E, F, and G constitute the peripheral sector of the complex. It depends on [4Fe-4S] cluster as a cofactor.

It is found in the cell inner membrane. It carries out the reaction a quinone + NADH + 5 H(+)(in) = a quinol + NAD(+) + 4 H(+)(out). Its function is as follows. NDH-1 shuttles electrons from NADH, via FMN and iron-sulfur (Fe-S) centers, to quinones in the respiratory chain. Couples the redox reaction to proton translocation (for every two electrons transferred, four hydrogen ions are translocated across the cytoplasmic membrane), and thus conserves the redox energy in a proton gradient. This chain is NADH-quinone oxidoreductase subunit B, found in Neisseria gonorrhoeae (strain NCCP11945).